The chain runs to 282 residues: NAD-dependent protein deacetylase 1 (282 aa).

A Deacetylase sirtuin-type domain is found at 1–282 (MTVGRAESPE…ADELSPLPTH (282 aa)). Residues 25–45 (GAGISTDSGIPDYRGPESPPS) and 101–104 (QNVD) contribute to the NAD(+) site. The active-site Proton acceptor is histidine 119. The Zn(2+) site is built by cysteine 127, cysteine 130, cysteine 181, and cysteine 184. NAD(+)-binding positions include 221-223 (GSS), 247-249 (NRG), and cysteine 265.

This sequence belongs to the sirtuin family. Class II subfamily. Requires Zn(2+) as cofactor.

The protein localises to the cytoplasm. The catalysed reaction is N(6)-acetyl-L-lysyl-[protein] + NAD(+) + H2O = 2''-O-acetyl-ADP-D-ribose + nicotinamide + L-lysyl-[protein]. Its function is as follows. NAD-dependent protein deacetylase which modulates the activities of several enzymes which are inactive in their acetylated form. The sequence is that of NAD-dependent protein deacetylase 1 from Mycobacterium avium (strain 104).